The chain runs to 348 residues: N-acetyl-gamma-glutamyl-phosphate reductase (348 aa).

C149 is a catalytic residue.

It belongs to the NAGSA dehydrogenase family. Type 1 subfamily.

It is found in the cytoplasm. The enzyme catalyses N-acetyl-L-glutamate 5-semialdehyde + phosphate + NADP(+) = N-acetyl-L-glutamyl 5-phosphate + NADPH + H(+). It participates in amino-acid biosynthesis; L-arginine biosynthesis; N(2)-acetyl-L-ornithine from L-glutamate: step 3/4. Catalyzes the NADPH-dependent reduction of N-acetyl-5-glutamyl phosphate to yield N-acetyl-L-glutamate 5-semialdehyde. This Cellvibrio japonicus (strain Ueda107) (Pseudomonas fluorescens subsp. cellulosa) protein is N-acetyl-gamma-glutamyl-phosphate reductase.